We begin with the raw amino-acid sequence, 692 residues long: Elongation factor G (692 aa).

The region spanning 8–282 is the tr-type G domain; it reads ENTRNIGIMA…GVVDYLPSPV (275 aa). GTP is bound by residues 17–24, 81–85, and 135–138; these read AHIDAGKT, DTPGH, and NKMD.

The protein belongs to the TRAFAC class translation factor GTPase superfamily. Classic translation factor GTPase family. EF-G/EF-2 subfamily.

The protein localises to the cytoplasm. Functionally, catalyzes the GTP-dependent ribosomal translocation step during translation elongation. During this step, the ribosome changes from the pre-translocational (PRE) to the post-translocational (POST) state as the newly formed A-site-bound peptidyl-tRNA and P-site-bound deacylated tRNA move to the P and E sites, respectively. Catalyzes the coordinated movement of the two tRNA molecules, the mRNA and conformational changes in the ribosome. The sequence is that of Elongation factor G from Geobacillus sp. (strain WCH70).